A 513-amino-acid chain; its full sequence is ATP synthase subunit alpha (513 aa).

Glycine 169–threonine 176 serves as a coordination point for ATP.

This sequence belongs to the ATPase alpha/beta chains family. F-type ATPases have 2 components, CF(1) - the catalytic core - and CF(0) - the membrane proton channel. CF(1) has five subunits: alpha(3), beta(3), gamma(1), delta(1), epsilon(1). CF(0) has three main subunits: a(1), b(2) and c(9-12). The alpha and beta chains form an alternating ring which encloses part of the gamma chain. CF(1) is attached to CF(0) by a central stalk formed by the gamma and epsilon chains, while a peripheral stalk is formed by the delta and b chains.

It is found in the cell inner membrane. It carries out the reaction ATP + H2O + 4 H(+)(in) = ADP + phosphate + 5 H(+)(out). Functionally, produces ATP from ADP in the presence of a proton gradient across the membrane. The alpha chain is a regulatory subunit. This is ATP synthase subunit alpha from Shewanella denitrificans (strain OS217 / ATCC BAA-1090 / DSM 15013).